Reading from the N-terminus, the 588-residue chain is Thioredoxin domain-containing protein 3 (588 aa).

The Thioredoxin domain occupies 2 to 119 (ASKKREVQLQ…VINLIDEERK (118 aa)). Cys-39 and Cys-42 are oxidised to a cystine. NDK stretches follow at residues 157–257 (IAII…DQPE), 315–455 (LEKT…STLG), and 456–588 (LIKP…PEEN). Residues 230-261 (GSKHNPPSEETEPQTDTEPNERSEDQPEVEAQ) form a disordered region.

This sequence in the C-terminal section; belongs to the NDK family. Monomer. In terms of tissue distribution, testis-specific. Expressed only in primary spermatocytes and round spermatids.

It is found in the cytoplasm. Functionally, probably required during the final stages of sperm tail maturation in the testis and/or epididymis, where extensive disulfide bonding of fibrous sheath (FS) proteins occurs. In vitro, it has neither nucleoside diphosphate kinase (NDPK) activity nor reducing activity on disulfide bonds. Exhibits a 3'-5' exonuclease activity with a preference for single-stranded DNA, suggesting roles in DNA proofreading and repair. The chain is Thioredoxin domain-containing protein 3 from Homo sapiens (Human).